Reading from the N-terminus, the 529-residue chain is Bifunctional purine biosynthesis protein PurH (529 aa).

The MGS-like domain occupies 1-148 (MQQRRPVRRA…KNHKDVAIVV (148 aa)).

This sequence belongs to the PurH family.

The enzyme catalyses (6R)-10-formyltetrahydrofolate + 5-amino-1-(5-phospho-beta-D-ribosyl)imidazole-4-carboxamide = 5-formamido-1-(5-phospho-D-ribosyl)imidazole-4-carboxamide + (6S)-5,6,7,8-tetrahydrofolate. It carries out the reaction IMP + H2O = 5-formamido-1-(5-phospho-D-ribosyl)imidazole-4-carboxamide. It functions in the pathway purine metabolism; IMP biosynthesis via de novo pathway; 5-formamido-1-(5-phospho-D-ribosyl)imidazole-4-carboxamide from 5-amino-1-(5-phospho-D-ribosyl)imidazole-4-carboxamide (10-formyl THF route): step 1/1. The protein operates within purine metabolism; IMP biosynthesis via de novo pathway; IMP from 5-formamido-1-(5-phospho-D-ribosyl)imidazole-4-carboxamide: step 1/1. The chain is Bifunctional purine biosynthesis protein PurH from Salmonella dublin (strain CT_02021853).